We begin with the raw amino-acid sequence, 153 residues long: Putative transcription factor YdeB (153 aa).

This sequence belongs to the CarD family.

The chain is Putative transcription factor YdeB (ydeB) from Bacillus subtilis (strain 168).